A 405-amino-acid polypeptide reads, in one-letter code: L-rhamnonate dehydratase (405 aa).

His-33 and Arg-59 together coordinate substrate. Mg(2+) contacts are provided by Asp-226, Glu-252, and Glu-280. His-329 acts as the Proton acceptor in catalysis. Glu-349 lines the substrate pocket.

Belongs to the mandelate racemase/muconate lactonizing enzyme family. RhamD subfamily. As to quaternary structure, homooctamer; tetramer of dimers. Requires Mg(2+) as cofactor.

It carries out the reaction L-rhamnonate = 2-dehydro-3-deoxy-L-rhamnonate + H2O. Functionally, catalyzes the dehydration of L-rhamnonate to 2-keto-3-deoxy-L-rhamnonate (KDR). Can also dehydrate L-lyxonate and L-mannonate, although less efficiently, but not 2-keto-4-hydroxyheptane-1,7-dioate. The sequence is that of L-rhamnonate dehydratase (rhmD) from Salmonella typhimurium (strain LT2 / SGSC1412 / ATCC 700720).